Consider the following 323-residue polypeptide: Arginase-1 (323 aa).

Residues 1 to 27 (MSSKPKPIEIIGAPFSKGQPRGGVEKG) form a disordered region. Lysine 17 bears the N6-succinyllysine mark. A phosphoserine mark is found at serine 62 and serine 72. Lysine 75 carries the post-translational modification N6-succinyllysine. Positions 101, 124, 126, and 128 each coordinate Mn(2+). Substrate contacts are provided by residues 126–130 (HTDIN) and 137–139 (SGN). A Phosphoserine modification is found at serine 163. Substrate is bound at residue aspartate 183. Position 217 is a phosphoserine (serine 217). Mn(2+)-binding residues include aspartate 232 and aspartate 234. Residues threonine 246 and glutamate 277 each contribute to the substrate site. Threonine 281 carries the post-translational modification Phosphothreonine.

It belongs to the arginase family. As to quaternary structure, homotrimer. Interacts with CMTM6. Requires Mn(2+) as cofactor. Detected in liver (at protein level).

It is found in the cytoplasm. It localises to the cytoplasmic granule. It carries out the reaction L-arginine + H2O = urea + L-ornithine. Its pathway is nitrogen metabolism; urea cycle; L-ornithine and urea from L-arginine: step 1/1. Its activity is regulated as follows. Inactivated by diethyl pyrocarbonate (DEPC). Its function is as follows. Key element of the urea cycle converting L-arginine to urea and L-ornithine, which is further metabolized into metabolites proline and polyamides that drive collagen synthesis and bioenergetic pathways critical for cell proliferation, respectively; the urea cycle takes place primarily in the liver and, to a lesser extent, in the kidneys. In terms of biological role, functions in L-arginine homeostasis in nonhepatic tissues characterized by the competition between nitric oxide synthase (NOS) and arginase for the available intracellular substrate arginine. Arginine metabolism is a critical regulator of innate and adaptive immune responses. Involved in an antimicrobial effector pathway in polymorphonuclear granulocytes (PMN). Upon PMN cell death is liberated from the phagolysosome and depletes arginine in the microenvironment leading to suppressed T cell and natural killer (NK) cell proliferation and cytokine secretion. In group 2 innate lymphoid cells (ILC2s) promotes acute type 2 inflammation in the lung and is involved in optimal ILC2 proliferation but not survival. Plays a role in the immune response of alternatively activated or M2 macrophages in processes such as wound healing and tissue regeneration, immune defense against multicellular pathogens and parasites, and immune suppression and allergic inflammation; the regulatory outcome seems to be organ specific. In tumor-infiltrating dendritic cells (DCs) and myeloid-derived suppressor cells (MDSCs) plays a role in suppression of T cell-mediated antitumor immunity. This chain is Arginase-1 (Arg1), found in Rattus norvegicus (Rat).